The following is a 258-amino-acid chain: MKITKLEKKKRLYLMELDNGDKCYITEDTIVRFMLSRDKVISEEELKEIQDFAQFSYGKNLALYHLSFKARTEKEVREYLKKYDIDENIVSQVIANLKEDKWINDGQYAYAIINTNQLSGDKGPYVLTQKLAQKGISKSTIEENLKEFDFSEVAQRVANKLLKKYEGKLPARALQDKIIQNLTNKGFSYSDAKIAFDELDSQVDEETTQELIFKELDKQYTKYARKYEGYELKQRLTQVLARKGYDFSDIASALREYL.

Belongs to the RecX family.

The protein resides in the cytoplasm. Functionally, modulates RecA activity. The polypeptide is Regulatory protein RecX (Streptococcus pneumoniae (strain Hungary19A-6)).